A 119-amino-acid chain; its full sequence is Large ribosomal subunit protein bL20 (119 aa).

The protein belongs to the bacterial ribosomal protein bL20 family.

Functionally, binds directly to 23S ribosomal RNA and is necessary for the in vitro assembly process of the 50S ribosomal subunit. It is not involved in the protein synthesizing functions of that subunit. The chain is Large ribosomal subunit protein bL20 from Bradyrhizobium diazoefficiens (strain JCM 10833 / BCRC 13528 / IAM 13628 / NBRC 14792 / USDA 110).